A 108-amino-acid polypeptide reads, in one-letter code: Heme oxygenase (staphylobilin-producing) 2 (108 aa).

The ABM domain maps to Phe-2–Leu-93. Position 6 (Asn-6) interacts with Fe cation. Heme contacts are provided by residues Arg-21–Ile-28 and His-76.

Belongs to the antibiotic biosynthesis monooxygenase family. Heme-degrading monooxygenase IsdG subfamily. In terms of assembly, homodimer.

The protein resides in the cytoplasm. The catalysed reaction is heme b + 5 AH2 + 4 O2 + 2 H(+) = delta-staphylobilin + Fe(2+) + formaldehyde + 5 A + 4 H2O. The enzyme catalyses heme b + 5 AH2 + 4 O2 + 2 H(+) = beta-staphylobilin + Fe(2+) + formaldehyde + 5 A + 4 H2O. Its function is as follows. Allows bacterial pathogens to use the host heme as an iron source. Catalyzes the oxidative degradation of the heme macrocyclic porphyrin ring to the oxo-bilirubin chromophore staphylobilin (a mixture of the linear tetrapyrroles 5-oxo-delta-bilirubin and 15-oxo-beta-bilirubin) in the presence of a suitable electron donor such as ascorbate or NADPH--cytochrome P450 reductase, with subsequent release of free iron. The protein is Heme oxygenase (staphylobilin-producing) 2 (isdI) of Staphylococcus aureus (strain MRSA252).